Reading from the N-terminus, the 239-residue chain is Protein GrpE (239 aa).

Disordered regions lie at residues 1 to 60 and 208 to 239; these read MIEN…SNND and SMGPGKQKSQQEVEKDTVEGDVDSDANTSEDV. The segment covering 28 to 42 has biased composition (polar residues); the sequence is SMQNSTTENDELSSQ. 2 stretches are compositionally biased toward basic and acidic residues: residues 43–53 and 216–225; these read KTEEINTEELK and SQQEVEKDTV. Acidic residues predominate over residues 226–239; the sequence is EGDVDSDANTSEDV.

It belongs to the GrpE family. Homodimer.

The protein resides in the cytoplasm. Participates actively in the response to hyperosmotic and heat shock by preventing the aggregation of stress-denatured proteins, in association with DnaK and GrpE. It is the nucleotide exchange factor for DnaK and may function as a thermosensor. Unfolded proteins bind initially to DnaJ; upon interaction with the DnaJ-bound protein, DnaK hydrolyzes its bound ATP, resulting in the formation of a stable complex. GrpE releases ADP from DnaK; ATP binding to DnaK triggers the release of the substrate protein, thus completing the reaction cycle. Several rounds of ATP-dependent interactions between DnaJ, DnaK and GrpE are required for fully efficient folding. The sequence is that of Protein GrpE from Prochlorococcus marinus (strain MIT 9301).